A 63-amino-acid chain; its full sequence is Parvalbumin alpha (63 aa).

EF-hand domains lie at 28–38 (IEEEELGLILK) and 39–63 (VLLA…LVSE). Positions 29, 32, 45, 47, 49, 51, and 56 each coordinate Ca(2+).

In terms of tissue distribution, detected in muscle and cutaneous mucus. In the skin, detected in cells in the basal region of the glandular epithelium of the dermal mucus glands (at protein level).

The protein resides in the cytoplasm. It localises to the secreted. In terms of biological role, in muscle, parvalbumin is thought to be involved in relaxation after contraction. It binds two calcium ions. This is Parvalbumin alpha from Rana temporaria (European common frog).